A 147-amino-acid chain; its full sequence is MASTRVLASRLASQMAASAKVARPAVRVAQVSKRTIQTGSPLQTLKRTQMTSIVNATTRQAFQKRAYSSEIAQAMVEVSKNLGMGSAAIGLTGAGIGIGLVFAALLNGVARNPALRGQLFSYAILGFAFVEAIGLFDLMVALMAKFT.

Residues 1–66 (MASTRVLASR…TTRQAFQKRA (66 aa)) constitute a mitochondrion transit peptide. A run of 2 helical transmembrane segments spans residues 86-106 (SAAIGLTGAGIGIGLVFAALL) and 123-143 (AILGFAFVEAIGLFDLMVALM).

The protein belongs to the ATPase C chain family. In terms of assembly, F-type ATPases have 2 components, CF(1) - the catalytic core - and CF(0) - the membrane proton channel. CF(1) has five subunits: alpha(3), beta(3), gamma(1), delta(1), epsilon(1). CF(0) has three main subunits: a, b and c.

The protein resides in the mitochondrion membrane. Mitochondrial membrane ATP synthase (F(1)F(0) ATP synthase or Complex V) produces ATP from ADP in the presence of a proton gradient across the membrane which is generated by electron transport complexes of the respiratory chain. F-type ATPases consist of two structural domains, F(1) - containing the extramembraneous catalytic core and F(0) - containing the membrane proton channel, linked together by a central stalk and a peripheral stalk. During catalysis, ATP synthesis in the catalytic domain of F(1) is coupled via a rotary mechanism of the central stalk subunits to proton translocation. Part of the complex F(0) domain. A homomeric c-ring of probably 10 subunits is part of the complex rotary element. The chain is ATP synthase subunit 9, mitochondrial (oli) from Neurospora crassa (strain ATCC 24698 / 74-OR23-1A / CBS 708.71 / DSM 1257 / FGSC 987).